We begin with the raw amino-acid sequence, 631 residues long: Phosphomethylpyrimidine synthase (631 aa).

Substrate is bound by residues asparagine 239, methionine 268, tyrosine 297, histidine 333, serine 353–glycine 355, aspartate 394–arginine 397, and glutamate 433. Histidine 437 is a binding site for Zn(2+). Tyrosine 460 contacts substrate. Histidine 501 is a Zn(2+) binding site. [4Fe-4S] cluster contacts are provided by cysteine 581, cysteine 584, and cysteine 589.

This sequence belongs to the ThiC family. As to quaternary structure, homodimer. [4Fe-4S] cluster serves as cofactor.

It catalyses the reaction 5-amino-1-(5-phospho-beta-D-ribosyl)imidazole + S-adenosyl-L-methionine = 4-amino-2-methyl-5-(phosphooxymethyl)pyrimidine + CO + 5'-deoxyadenosine + formate + L-methionine + 3 H(+). The protein operates within cofactor biosynthesis; thiamine diphosphate biosynthesis. In terms of biological role, catalyzes the synthesis of the hydroxymethylpyrimidine phosphate (HMP-P) moiety of thiamine from aminoimidazole ribotide (AIR) in a radical S-adenosyl-L-methionine (SAM)-dependent reaction. The polypeptide is Phosphomethylpyrimidine synthase (Salmonella paratyphi C (strain RKS4594)).